Reading from the N-terminus, the 614-residue chain is Replication protein E1 (614 aa).

A disordered region spans residues 1 to 25; it reads MASRVSDTGNGNENKENEGTVASDH. Over residues 13 to 25 the composition is skewed to basic and acidic residues; that stretch reads ENKENEGTVASDH. Positions 88–90 match the Nuclear localization signal motif; it reads KRK. 2 positions are modified to phosphoserine; by host: serine 94 and serine 104. The short motif at 103–112 is the Nuclear export signal element; sequence LSPRLAGVSL. Polar residues predominate over residues 136–146; that stretch reads VEVSQLSSTPS. Residues 136–156 are disordered; that stretch reads VEVSQLSSTPSAPGPDIRLPK. The DNA-binding region stretch occupies residues 154–316; sequence LPKPSDIDLE…NQCVVSNQQT (163 aa). The SF3 helicase domain maps to 403 to 567; it reads NSWRGIVHFL…FPLKGNGQPL (165 aa). An ATP-binding site is contributed by 443 to 450; sequence GPSDTGKS.

Belongs to the papillomaviridae E1 protein family. In terms of assembly, can form hexamers. Interacts with E2 protein; this interaction increases E1 DNA binding specificity. Interacts with host DNA polymerase subunit POLA2. Interacts with host single stranded DNA-binding protein RPA1. Interacts with host TOP1; this interaction stimulates the enzymatic activity of TOP1. Phosphorylated.

It localises to the host nucleus. It catalyses the reaction Couples ATP hydrolysis with the unwinding of duplex DNA by translocating in the 3'-5' direction.. The enzyme catalyses ATP + H2O = ADP + phosphate + H(+). Functionally, ATP-dependent DNA 3'-5' helicase required for initiation of viral DNA replication. It forms a complex with the viral E2 protein. The E1-E2 complex binds to the replication origin which contains binding sites for both proteins. During the initial step, a dimer of E1 interacts with a dimer of protein E2 leading to a complex that binds the viral origin of replication with high specificity. Then, a second dimer of E1 displaces the E2 dimer in an ATP-dependent manner to form the E1 tetramer. Following this, two E1 monomers are added to each half of the site, which results in the formation of two E1 trimers on the viral ori. Subsequently, two hexamers will be created. The double hexamer acts as a bi-directional helicase machinery and unwinds the viral DNA and then recruits the host DNA polymerase to start replication. The chain is Replication protein E1 from Homo sapiens (Human).